The sequence spans 683 residues: Elongation factor G 1 (683 aa).

Residues 3–278 (DKMRNIGIMA…AVVDFLPAPN (276 aa)) enclose the tr-type G domain. Residues 12-19 (AHIDAGKT), 76-80 (DTPGH), and 130-133 (NKMD) contribute to the GTP site.

It belongs to the TRAFAC class translation factor GTPase superfamily. Classic translation factor GTPase family. EF-G/EF-2 subfamily.

It localises to the cytoplasm. In terms of biological role, catalyzes the GTP-dependent ribosomal translocation step during translation elongation. During this step, the ribosome changes from the pre-translocational (PRE) to the post-translocational (POST) state as the newly formed A-site-bound peptidyl-tRNA and P-site-bound deacylated tRNA move to the P and E sites, respectively. Catalyzes the coordinated movement of the two tRNA molecules, the mRNA and conformational changes in the ribosome. In Treponema denticola (strain ATCC 35405 / DSM 14222 / CIP 103919 / JCM 8153 / KCTC 15104), this protein is Elongation factor G 1.